The following is a 720-amino-acid chain: Glycine--tRNA ligase beta subunit (720 aa).

The protein belongs to the class-II aminoacyl-tRNA synthetase family. In terms of assembly, tetramer of two alpha and two beta subunits.

The protein resides in the cytoplasm. It carries out the reaction tRNA(Gly) + glycine + ATP = glycyl-tRNA(Gly) + AMP + diphosphate. This Dinoroseobacter shibae (strain DSM 16493 / NCIMB 14021 / DFL 12) protein is Glycine--tRNA ligase beta subunit.